Here is a 397-residue protein sequence, read N- to C-terminus: Lysophospholipid transporter LplT (397 aa).

11 helical membrane passes run 16–36 (MLAV…LLFA), 53–73 (VLQM…GQFA), 91–111 (LGAG…LVGI), 139–159 (LMES…GILA), 164–184 (LAAL…NLWI), 227–247 (LFWG…PVAL), 253–273 (AMPT…AGAA), 281–301 (TVSR…AFAV), 305–325 (LLPA…FIVP), 352–372 (NVAM…GVPP), and 373–393 (VAVG…LWVW).

The protein belongs to the major facilitator superfamily. LplT (TC 2.A.1.42) family.

It localises to the cell inner membrane. Catalyzes the facilitated diffusion of 2-acyl-glycero-3-phosphoethanolamine (2-acyl-GPE) into the cell. The polypeptide is Lysophospholipid transporter LplT (Klebsiella pneumoniae subsp. pneumoniae (strain ATCC 700721 / MGH 78578)).